A 207-amino-acid polypeptide reads, in one-letter code: Large ribosomal subunit protein bL25 (207 aa).

The tract at residues 182 to 207 (QDLGDESVQEEQAAESAEGESEGSED) is disordered.

Belongs to the bacterial ribosomal protein bL25 family. CTC subfamily. Part of the 50S ribosomal subunit; part of the 5S rRNA/L5/L18/L25 subcomplex. Contacts the 5S rRNA. Binds to the 5S rRNA independently of L5 and L18.

In terms of biological role, this is one of the proteins that binds to the 5S RNA in the ribosome where it forms part of the central protuberance. This Micrococcus luteus (strain ATCC 4698 / DSM 20030 / JCM 1464 / CCM 169 / CCUG 5858 / IAM 1056 / NBRC 3333 / NCIMB 9278 / NCTC 2665 / VKM Ac-2230) (Micrococcus lysodeikticus) protein is Large ribosomal subunit protein bL25.